A 304-amino-acid polypeptide reads, in one-letter code: Small glutamine-rich tetratricopeptide repeat-containing protein beta (304 aa).

TPR repeat units follow at residues 15-49 (LREQ…SPED), 85-118 (ADQL…DPNN), 120-152 (VYYC…DSKY), and 153-186 (SKAY…DPEN). The residue at position 131 (Lys131) is an N6-acetyllysine. Phosphoserine occurs at positions 293, 295, and 297.

The protein belongs to the SGT family. Homooligomerize. In terms of tissue distribution, expressed specifically in brain.

Functionally, co-chaperone that binds directly to HSC70 and HSP70 and regulates their ATPase activity. The polypeptide is Small glutamine-rich tetratricopeptide repeat-containing protein beta (Sgtb) (Rattus norvegicus (Rat)).